The following is a 127-amino-acid chain: Small ribosomal subunit protein bS6 (127 aa).

Basic and acidic residues predominate over residues 106-117 (ERKAQSEKKEAE). The segment at 106-127 (ERKAQSEKKEAEVSEGEGGTEA) is disordered. Residues 118–127 (VSEGEGGTEA) are compositionally biased toward acidic residues.

Belongs to the bacterial ribosomal protein bS6 family.

In terms of biological role, binds together with bS18 to 16S ribosomal RNA. The polypeptide is Small ribosomal subunit protein bS6 (Thermotoga neapolitana (strain ATCC 49049 / DSM 4359 / NBRC 107923 / NS-E)).